Consider the following 1202-residue polypeptide: Voltage-gated inwardly rectifying potassium channel KCNH6 (1202 aa).

The Cytoplasmic portion of the chain corresponds to 1-405; that stretch reads MGSAALPHAR…YSPFKAVWDW (405 aa). The PAS domain occupies 36–84; it reads IIYCNDGFCEMFGYSRVEVMQRPCTCDFLTGPDTTKSSIAQLTQALLGS. The PAC domain maps to 87-139; the sequence is CKLEILYYRKDTSCFRCLVDVVPVKNEDGVVIMFILNFEDLAQLIAKSSGRSL. 2 disordered regions span residues 203 to 243 and 285 to 315; these read ENCV…LGPR and ERRA…SDSD. Over residues 213–222 the composition is skewed to basic and acidic residues; it reads LLEKERRPSL. A helical membrane pass occupies residues 406 to 426; the sequence is LILLLVIYTAVFTPYSAAFLL. The Extracellular segment spans residues 427-443; sequence NEEQGEEKHWNCSYSCD. A glycan (N-linked (GlcNAc...) asparagine) is linked at N437. A helical transmembrane segment spans residues 444–464; the sequence is PLNIIDLIVDIMFIVDIVINF. Topologically, residues 465–485 are cytoplasmic; the sequence is RTTYVNINDEVVSHPGKIAIH. A helical membrane pass occupies residues 486-506; the sequence is YFKGWFLIDMVAAIPFDLLIF. Residues 507–515 are Extracellular-facing; the sequence is RSGSDETTT. A helical; Voltage-sensor membrane pass occupies residues 516–536; the sequence is LIGLLKTARLLRLVRVARKLD. Over 537–543 the chain is Cytoplasmic; sequence RYSEYGA. The helical transmembrane segment at 544–564 threads the bilayer; that stretch reads AVLFLLMCTFALIAHWLACIW. The Extracellular portion of the chain corresponds to 565–608; sequence YAIGNVERPYMEHKIGWLDNLGDQIGKRYNDSDLSSGPSIKDKY. N-linked (GlcNAc...) asparagine glycosylation occurs at N594. An intramembrane region (pore-forming) is located at residues 609–629; it reads VTALYFTFSSLTSVGFGNVSP. A Selectivity filter motif is present at residues 621–626; the sequence is SVGFGN. Over 630–635 the chain is Extracellular; sequence NTNSEK. The helical transmembrane segment at 636–656 threads the bilayer; the sequence is IFSICVMLIGSLMYASIFGNV. At 657 to 1202 the chain is on the cytoplasmic side; it reads SAIIQRLYSG…HLSDPVLPGS (546 aa). A cNMP-binding domain region spans residues 739-839; that stretch reads AFRGASKGCL…IQREDLLEVL (101 aa). Disordered stretches follow at residues 912-948, 1092-1112, and 1140-1202; these read LTNP…GSPT, TPCA…PSYA, and TVYS…LPGS. Positions 928–937 are enriched in polar residues; sequence GSSTTPCSQT. Positions 1179-1195 are enriched in basic and acidic residues; sequence EHLEASSEHQDIQRHLS.

Belongs to the potassium channel family. H (Eag) (TC 1.A.1.20) subfamily. Kv11.2/KCNH6 sub-subfamily. In terms of assembly, the potassium channel is probably composed of a homo- or heterotetrameric complex of pore-forming alpha subunits that can associate only within their subfamily.

Its subcellular location is the cell membrane. It carries out the reaction K(+)(in) = K(+)(out). In terms of biological role, pore-forming (alpha) subunit of voltage-gated inwardly rectifying potassium channel. Characterized by unusual gating kinetics by producing relatively small outward currents during membrane depolarization and large inward currents during subsequent repolarization which reflect a rapid inactivation during depolarization and quick recovery from inactivation but slow deactivation (closing) during repolarization. Activates even more slowly than KCNH2. The sequence is that of Voltage-gated inwardly rectifying potassium channel KCNH6 from Gallus gallus (Chicken).